Reading from the N-terminus, the 325-residue chain is Glutarate 2-hydroxylase (325 aa).

Residues H160, D162, and H292 each contribute to the Fe cation site.

This sequence belongs to the glutarate hydroxylase family. Homotetramer. Fe(2+) serves as cofactor.

It catalyses the reaction glutarate + 2-oxoglutarate + O2 = (S)-2-hydroxyglutarate + succinate + CO2. Its pathway is amino-acid degradation. Acts as an alpha-ketoglutarate-dependent dioxygenase catalyzing hydroxylation of glutarate (GA) to L-2-hydroxyglutarate (L2HG). Functions in a L-lysine degradation pathway that proceeds via cadaverine, glutarate and L-2-hydroxyglutarate. This Escherichia coli O6:K15:H31 (strain 536 / UPEC) protein is Glutarate 2-hydroxylase.